Here is a 186-residue protein sequence, read N- to C-terminus: MSAEFDISDLKRRMQGAIATLKHELGGLRTGRATASLLEPVHVDAYGQSLPLNQVATISVAEARMLSVQVWDKGMVGPVDKAIRDSNLGLSPTVEGQILRIRIPELNEQRRKEMAKVAHKYAEEAKVAVRHVRRDGIDTLKKLLKDKAIGEDDEKRHAAEIQKVTDQFVGEVDQALAAKEKEIMQV.

It belongs to the RRF family.

It is found in the cytoplasm. In terms of biological role, responsible for the release of ribosomes from messenger RNA at the termination of protein biosynthesis. May increase the efficiency of translation by recycling ribosomes from one round of translation to another. The sequence is that of Ribosome-recycling factor from Beijerinckia indica subsp. indica (strain ATCC 9039 / DSM 1715 / NCIMB 8712).